The following is a 104-amino-acid chain: ATP-dependent Clp protease adapter protein ClpS (104 aa).

The protein belongs to the ClpS family. As to quaternary structure, binds to the N-terminal domain of the chaperone ClpA.

Its function is as follows. Involved in the modulation of the specificity of the ClpAP-mediated ATP-dependent protein degradation. In Oleidesulfovibrio alaskensis (strain ATCC BAA-1058 / DSM 17464 / G20) (Desulfovibrio alaskensis), this protein is ATP-dependent Clp protease adapter protein ClpS.